The sequence spans 738 residues: Alanine--tRNA ligase (738 aa).

The Zn(2+) site is built by His-564, His-568, Cys-666, and His-670.

The protein belongs to the class-II aminoacyl-tRNA synthetase family. In terms of assembly, homotetramer. The cofactor is Zn(2+).

It localises to the cytoplasm. The catalysed reaction is tRNA(Ala) + L-alanine + ATP = L-alanyl-tRNA(Ala) + AMP + diphosphate. In terms of biological role, catalyzes the attachment of alanine to tRNA(Ala) in a two-step reaction: alanine is first activated by ATP to form Ala-AMP and then transferred to the acceptor end of tRNA(Ala). Also edits incorrectly charged Ser-tRNA(Ala) and Gly-tRNA(Ala) via its editing domain. The polypeptide is Alanine--tRNA ligase (alaS) (Yersinia pestis bv. Antiqua (strain Antiqua)).